The primary structure comprises 336 residues: Biotin synthase (336 aa).

Residues 36-263 form the Radical SAM core domain; the sequence is TKVQISTLLS…ESHVRLAAGR (228 aa). The [4Fe-4S] cluster site is built by cysteine 51, cysteine 55, and cysteine 58. [2Fe-2S] cluster-binding residues include cysteine 95, cysteine 126, cysteine 186, and arginine 258.

It belongs to the radical SAM superfamily. Biotin synthase family. Homodimer. It depends on [4Fe-4S] cluster as a cofactor. Requires [2Fe-2S] cluster as cofactor.

The catalysed reaction is (4R,5S)-dethiobiotin + (sulfur carrier)-SH + 2 reduced [2Fe-2S]-[ferredoxin] + 2 S-adenosyl-L-methionine = (sulfur carrier)-H + biotin + 2 5'-deoxyadenosine + 2 L-methionine + 2 oxidized [2Fe-2S]-[ferredoxin]. The protein operates within cofactor biosynthesis; biotin biosynthesis; biotin from 7,8-diaminononanoate: step 2/2. Its function is as follows. Catalyzes the conversion of dethiobiotin (DTB) to biotin by the insertion of a sulfur atom into dethiobiotin via a radical-based mechanism. This Gluconobacter oxydans (strain 621H) (Gluconobacter suboxydans) protein is Biotin synthase.